The primary structure comprises 488 residues: 3-octaprenyl-4-hydroxybenzoate carboxy-lyase (488 aa).

Residue Asn-172 coordinates Mn(2+). Prenylated FMN contacts are provided by residues 175–177 (IYR), 189–191 (RWL), and 194–195 (RG). Glu-238 is a binding site for Mn(2+). Asp-287 serves as the catalytic Proton donor.

Belongs to the UbiD family. As to quaternary structure, homohexamer. The cofactor is prenylated FMN. Requires Mn(2+) as cofactor.

It is found in the cell membrane. The enzyme catalyses a 4-hydroxy-3-(all-trans-polyprenyl)benzoate + H(+) = a 2-(all-trans-polyprenyl)phenol + CO2. It participates in cofactor biosynthesis; ubiquinone biosynthesis. In terms of biological role, catalyzes the decarboxylation of 3-octaprenyl-4-hydroxy benzoate to 2-octaprenylphenol, an intermediate step in ubiquinone biosynthesis. This Pseudomonas syringae pv. tomato (strain ATCC BAA-871 / DC3000) protein is 3-octaprenyl-4-hydroxybenzoate carboxy-lyase.